Reading from the N-terminus, the 419-residue chain is Gamma-glutamyl phosphate reductase (419 aa).

Belongs to the gamma-glutamyl phosphate reductase family.

The protein resides in the cytoplasm. The catalysed reaction is L-glutamate 5-semialdehyde + phosphate + NADP(+) = L-glutamyl 5-phosphate + NADPH + H(+). The protein operates within amino-acid biosynthesis; L-proline biosynthesis; L-glutamate 5-semialdehyde from L-glutamate: step 2/2. In terms of biological role, catalyzes the NADPH-dependent reduction of L-glutamate 5-phosphate into L-glutamate 5-semialdehyde and phosphate. The product spontaneously undergoes cyclization to form 1-pyrroline-5-carboxylate. This Oleidesulfovibrio alaskensis (strain ATCC BAA-1058 / DSM 17464 / G20) (Desulfovibrio alaskensis) protein is Gamma-glutamyl phosphate reductase.